The following is a 194-amino-acid chain: Probable nicotinate-nucleotide adenylyltransferase (194 aa).

Belongs to the NadD family.

The enzyme catalyses nicotinate beta-D-ribonucleotide + ATP + H(+) = deamido-NAD(+) + diphosphate. It functions in the pathway cofactor biosynthesis; NAD(+) biosynthesis; deamido-NAD(+) from nicotinate D-ribonucleotide: step 1/1. Catalyzes the reversible adenylation of nicotinate mononucleotide (NaMN) to nicotinic acid adenine dinucleotide (NaAD). The sequence is that of Probable nicotinate-nucleotide adenylyltransferase from Brucella abortus (strain 2308).